The chain runs to 221 residues: Ktr system potassium uptake protein C (221 aa).

The region spanning Lys-2–Val-118 is the RCK N-terminal domain. Residues Arg-12, Asp-32–Asp-34, Asp-52–Ser-53, Ile-74–Glu-76, Lys-99–Gln-101, His-105, and Glu-121 each bind NAD(+). Residues Asn-135–His-219 form the RCK C-terminal domain.

The protein belongs to the KtrA potassium transport family. As to quaternary structure, homodimer, tetramer (dimer of homodimer) and octamer (tetramer of homodimer). Part of the KtrCD complex formed by an octameric catalytic ring of KtrC and a membrane associated dimer of KtrD forming a potassium channel.

Its subcellular location is the cell membrane. Its function is as follows. Catalytic subunit of the KtrCD potassium uptake transporter. The 2 major potassium transporter complexes KtrAB and KtrCD confer resistance to both suddenly imposed and prolonged osmotic stress. The polypeptide is Ktr system potassium uptake protein C (ktrC) (Bacillus subtilis (strain 168)).